We begin with the raw amino-acid sequence, 61 residues long: Small ribosomal subunit protein uS14 (61 aa).

Zn(2+)-binding residues include Cys24, Cys27, Cys40, and Cys43.

Belongs to the universal ribosomal protein uS14 family. Zinc-binding uS14 subfamily. As to quaternary structure, part of the 30S ribosomal subunit. Contacts proteins S3 and S10. Zn(2+) is required as a cofactor.

Its function is as follows. Binds 16S rRNA, required for the assembly of 30S particles and may also be responsible for determining the conformation of the 16S rRNA at the A site. The chain is Small ribosomal subunit protein uS14 from Natranaerobius thermophilus (strain ATCC BAA-1301 / DSM 18059 / JW/NM-WN-LF).